Reading from the N-terminus, the 320-residue chain is SUN domain-containing protein 3 (320 aa).

Residues 1–6 lie on the Nuclear side of the membrane; the sequence is MLTRSW. The helical transmembrane segment at 7–29 threads the bilayer; that stretch reads KIILSTVFISTFLLVGLLNHQWL. Over 30–320 the chain is Perinuclear space; the sequence is KETEFPQKPR…RVHGIPSDYT (291 aa). Residues 63–102 are a coiled coil; the sequence is KEQQELLKKESQTLENNFREILFLIEQIDVLKALLKDMKD. An SUN domain is found at 156–317; it reads GASVIEAGTS…YRFRVHGIPS (162 aa).

As to quaternary structure, self-associates. Interacts with SYNE1 and SPAG4/SUN4. Proposed to form a spermatogenesis-specific LINC complex with SYNE1 during sperm head formation possibly implicating a SUN domain-based heterotrimer with SPAG4/SUN4 associating with SYNE1. Can interact with SYNE3; the interaction is questioned by missing colocalization in spermatids. In terms of tissue distribution, specifically expressed in testis (at protein level).

It is found in the membrane. Its subcellular location is the nucleus envelope. The protein resides in the nucleus inner membrane. Functionally, as a probable component of the LINC (LInker of Nucleoskeleton and Cytoskeleton) complex, involved in the connection between the nuclear lamina and the cytoskeleton. The nucleocytoplasmic interactions established by the LINC complex play an important role in the transmission of mechanical forces across the nuclear envelope and in nuclear movement and positioning. May be involved in nuclear remodeling during sperm head formation in spermatogenesis. A probable SUN3:SYNE1 LINC complex may tether spermatid nuclei to posterior cytoskeletal structures such as the manchette. The chain is SUN domain-containing protein 3 (Sun3) from Mus musculus (Mouse).